The following is a 261-amino-acid chain: Carbonic anhydrase 1 (261 aa).

Positions M1–P31 are disordered. The residue at position 2 (A2) is an N-acetylalanine. An Alpha-carbonic anhydrase domain is found at P4–F261. The Proton donor/acceptor role is filled by H65. Zn(2+) is bound by residues H65, H68, H95, H97, and H120. Substrate is bound by residues T200 and T200–H201. H201 is a binding site for Zn(2+). Positions P241–F261 are disordered.

It belongs to the alpha-carbonic anhydrase family. Zn(2+) is required as a cofactor.

It localises to the cytoplasm. It carries out the reaction hydrogencarbonate + H(+) = CO2 + H2O. It catalyses the reaction urea = cyanamide + H2O. With respect to regulation, activated by histamine, imidazole, L-adrenaline, L- and D-histidine, and L- and D-phenylalanine. Inhibited by coumarins, sulfonamide derivatives such as acetazolamide, benzenesulfonamide and derivatives (4-carboxyethylbenzene-sulfonamide, 4-carboxyethylbenzene-sulfonamide ethyl ester, 4-(acetyl-2-aminoethyl)benzene-sulfonamide, 4-aminoethylbenzene-sulfonamide), and 'prong inhibitors' BR15, BR17, BR22 and BR30. Activated by a short exposition to Foscarnet (phosphonoformate trisodium salt), but inhibited by a long one. Esterase activity weakly reduced by cyanamide. Functionally, catalyzes the reversible hydration of carbon dioxide. Can hydrate cyanamide to urea. This is Carbonic anhydrase 1 (CA1) from Homo sapiens (Human).